The chain runs to 239 residues: Ribosomal RNA small subunit methyltransferase G (239 aa).

S-adenosyl-L-methionine-binding positions include glycine 78, phenylalanine 83, 129–130 (AE), and arginine 148.

The protein belongs to the methyltransferase superfamily. RNA methyltransferase RsmG family.

The protein resides in the cytoplasm. In terms of biological role, specifically methylates the N7 position of a guanine in 16S rRNA. In Clostridium perfringens (strain 13 / Type A), this protein is Ribosomal RNA small subunit methyltransferase G.